Reading from the N-terminus, the 311-residue chain is Acyl-CoA dehydrogenase IpdE2 (311 aa).

FAD-binding residues include Arg206 and Gly273.

The protein belongs to the acyl-CoA dehydrogenase family. As to quaternary structure, heterotetramer composed of 2 IpdE1 subunits and 2 IpdE2 subunits. FAD serves as cofactor.

It catalyses the reaction 3-[(3aS,4S,5R,7aS)-5-hydroxy-7a-methyl-1-oxo-octahydro-1H-inden-4-yl]propanoyl-CoA + A = (2E)-3-[(3aS,4S,5R,7aS)-5-hydroxy-7a-methyl-1-oxo-octahydro-1H-inden-4-yl]prop-2-enoyl-CoA + AH2. Its pathway is steroid metabolism; cholesterol degradation. Involved in cholesterol degradation. Catalyzes the dehydrogenation of 5OH-HIP-CoA to 5OH-HIPE-CoA. The polypeptide is Acyl-CoA dehydrogenase IpdE2 (Mycolicibacterium smegmatis (strain ATCC 700084 / mc(2)155) (Mycobacterium smegmatis)).